The primary structure comprises 179 residues: Zinc finger HIT domain-containing protein 3 (179 aa).

Residues cysteine 11, cysteine 14, cysteine 22, cysteine 25, cysteine 30, cysteine 34, histidine 38, and cysteine 49 each contribute to the Zn(2+) site. The HIT-type zinc finger occupies 11 to 49 (CVVCLEKPKYRCPACRVPYCSLPCFRKHKAPPLQQLPVC). Serine 104 is modified (phosphoserine).

Thyroid receptor interacting proteins (TRIPs) specifically interact with the ligand binding domain of the thyroid receptor (TR). Requires the presence of thyroid hormone for its interaction. Interacts with NUFIP1. Interacts (via HIT-type zinc finger) with the RUVBL1/RUVBL2 complex in the presence of ADP.

It is found in the cytoplasm. It localises to the nucleus. In Bos taurus (Bovine), this protein is Zinc finger HIT domain-containing protein 3 (ZNHIT3).